The following is a 476-amino-acid chain: Undecaprenyl-phosphate galactose phosphotransferase (476 aa).

The next 5 helical transmembrane spans lie at 15–35 (IFLA…SLGC), 52–72 (LDTR…WFWI), 93–113 (TIVI…WQFS), 115–135 (YVWV…RALT), and 283–303 (FDIV…IYLW). The Cytoplasmic segment spans residues 304–476 (YKVTRDGGPA…KVVLRRDGAY (173 aa)).

The protein belongs to the bacterial sugar transferase family.

The protein localises to the cell inner membrane. The catalysed reaction is di-trans,octa-cis-undecaprenyl phosphate + UDP-alpha-D-galactose = alpha-D-galactosyl-di-trans,octa-cis-undecaprenyl diphosphate + UMP. It participates in bacterial outer membrane biogenesis; LPS O-antigen biosynthesis. Functionally, is responsible for transferring galactose-1-phosphate to the lipid precursor undecaprenol phosphate in the first steps of O-polysaccharide biosynthesis. This Salmonella typhimurium (strain LT2 / SGSC1412 / ATCC 700720) protein is Undecaprenyl-phosphate galactose phosphotransferase (rfbP).